The following is a 146-amino-acid chain: Hut operon positive regulatory protein (146 aa).

Belongs to the HutP family. In terms of assembly, homohexamer.

Antiterminator that binds to cis-acting regulatory sequences on the mRNA in the presence of histidine, thereby suppressing transcription termination and activating the hut operon for histidine utilization. The chain is Hut operon positive regulatory protein from Bacillus cereus (strain G9842).